The following is a 55-amino-acid chain: MPQLNPSPWLLILLFSWLIFLTMLPSKTQLHTFPNMPSTQNMCKQEPEPWTWPWA.

The helical transmembrane segment at 4–24 (LNPSPWLLILLFSWLIFLTML) threads the bilayer. The segment at 36-55 (MPSTQNMCKQEPEPWTWPWA) is disordered.

Belongs to the ATPase protein 8 family. As to quaternary structure, component of the ATP synthase complex composed at least of ATP5F1A/subunit alpha, ATP5F1B/subunit beta, ATP5MC1/subunit c (homooctomer), MT-ATP6/subunit a, MT-ATP8/subunit 8, ATP5ME/subunit e, ATP5MF/subunit f, ATP5MG/subunit g, ATP5MK/subunit k, ATP5MJ/subunit j, ATP5F1C/subunit gamma, ATP5F1D/subunit delta, ATP5F1E/subunit epsilon, ATP5PF/subunit F6, ATP5PB/subunit b, ATP5PD/subunit d, ATP5PO/subunit OSCP. ATP synthase complex consists of a soluble F(1) head domain (subunits alpha(3) and beta(3)) - the catalytic core - and a membrane F(0) domain - the membrane proton channel (subunits c, a, 8, e, f, g, k and j). These two domains are linked by a central stalk (subunits gamma, delta, and epsilon) rotating inside the F1 region and a stationary peripheral stalk (subunits F6, b, d, and OSCP).

The protein localises to the mitochondrion membrane. Its function is as follows. Subunit 8, of the mitochondrial membrane ATP synthase complex (F(1)F(0) ATP synthase or Complex V) that produces ATP from ADP in the presence of a proton gradient across the membrane which is generated by electron transport complexes of the respiratory chain. ATP synthase complex consist of a soluble F(1) head domain - the catalytic core - and a membrane F(1) domain - the membrane proton channel. These two domains are linked by a central stalk rotating inside the F(1) region and a stationary peripheral stalk. During catalysis, ATP synthesis in the catalytic domain of F(1) is coupled via a rotary mechanism of the central stalk subunits to proton translocation. In vivo, can only synthesize ATP although its ATP hydrolase activity can be activated artificially in vitro. Part of the complex F(0) domain. This chain is ATP synthase F(0) complex subunit 8, found in Latimeria chalumnae (Coelacanth).